Here is a 753-residue protein sequence, read N- to C-terminus: Replication restart protein PriA (753 aa).

One can recognise a Helicase ATP-binding domain in the interval 228-395 (SLITTKFQTC…LSKKYTLSVL (168 aa)). 241 to 248 (GVTGSGKT) lines the ATP pocket. A DEAH box motif is present at residues 337-340 (DEEH). Residues Cys458, Cys461, Cys467, Cys470, Cys485, Cys488, Cys499, and Cys502 each coordinate Zn(2+). Residues 491-646 (RLSKPITSCP…DFPAFYKEEI (156 aa)) form the Helicase C-terminal domain.

This sequence belongs to the helicase family. PriA subfamily. In terms of assembly, component of the replication restart primosome. Requires Zn(2+) as cofactor.

It catalyses the reaction Couples ATP hydrolysis with the unwinding of duplex DNA by translocating in the 3'-5' direction.. It carries out the reaction ATP + H2O = ADP + phosphate + H(+). In terms of biological role, initiates the restart of stalled replication forks, which reloads the replicative helicase on sites other than the origin of replication. Recognizes and binds to abandoned replication forks and remodels them to uncover a helicase loading site. Promotes assembly of the primosome at these replication forks. The chain is Replication restart protein PriA from Chlamydia muridarum (strain MoPn / Nigg).